Here is a 332-residue protein sequence, read N- to C-terminus: Ketol-acid reductoisomerase (NADP(+)) (332 aa).

Positions 2–182 (AKIYTDKDVS…GATRAGVIET (181 aa)) constitute a KARI N-terminal Rossmann domain. Residues 25-28 (YGSQ), Ser53, and 83-86 (DMIQ) contribute to the NADP(+) site. Residue His108 is part of the active site. Gly134 is a binding site for NADP(+). Residues 183–328 (TFKEETETDL…RSLRDIILRG (146 aa)) form the KARI C-terminal knotted domain. Positions 191, 195, 227, and 231 each coordinate Mg(2+). Ser252 lines the substrate pocket.

Belongs to the ketol-acid reductoisomerase family. Mg(2+) serves as cofactor.

The catalysed reaction is (2R)-2,3-dihydroxy-3-methylbutanoate + NADP(+) = (2S)-2-acetolactate + NADPH + H(+). It carries out the reaction (2R,3R)-2,3-dihydroxy-3-methylpentanoate + NADP(+) = (S)-2-ethyl-2-hydroxy-3-oxobutanoate + NADPH + H(+). It participates in amino-acid biosynthesis; L-isoleucine biosynthesis; L-isoleucine from 2-oxobutanoate: step 2/4. Its pathway is amino-acid biosynthesis; L-valine biosynthesis; L-valine from pyruvate: step 2/4. In terms of biological role, involved in the biosynthesis of branched-chain amino acids (BCAA). Catalyzes an alkyl-migration followed by a ketol-acid reduction of (S)-2-acetolactate (S2AL) to yield (R)-2,3-dihydroxy-isovalerate. In the isomerase reaction, S2AL is rearranged via a Mg-dependent methyl migration to produce 3-hydroxy-3-methyl-2-ketobutyrate (HMKB). In the reductase reaction, this 2-ketoacid undergoes a metal-dependent reduction by NADPH to yield (R)-2,3-dihydroxy-isovalerate. This Sulfolobus acidocaldarius (strain ATCC 33909 / DSM 639 / JCM 8929 / NBRC 15157 / NCIMB 11770) protein is Ketol-acid reductoisomerase (NADP(+)).